A 309-amino-acid polypeptide reads, in one-letter code: Olfactory receptor 10V1 (309 aa).

Residues 1–25 are Extracellular-facing; the sequence is MEGINKTAKMQFFFRPFSPDPEVQM. Asn5 carries an N-linked (GlcNAc...) asparagine glycan. Residues 26-46 traverse the membrane as a helical segment; the sequence is LIFVVFLMMYLTSLGGNATIA. Over 47 to 54 the chain is Cytoplasmic; that stretch reads VIVQINHS. Residues 55–75 traverse the membrane as a helical segment; it reads LHTPMYFFLANLAVLEIFYTS. Over 76–100 the chain is Extracellular; that stretch reads SITPLALANLLSMGKTPVSITGCGT. An intrachain disulfide couples Cys98 to Cys190. Residues 101-121 form a helical membrane-spanning segment; that stretch reads QMFFFVFLGGADCVLLVVMAY. Topologically, residues 122–140 are cytoplasmic; sequence DQFIAICHPLRYRLIMSWS. Residues 141–161 form a helical membrane-spanning segment; that stretch reads LCVELLVGSLVLGFLLSLPLT. Residues 162–198 lie on the Extracellular side of the membrane; it reads ILIFHLPFCHNDEIYHFYCDMPAVMRLACADTRVHKT. Residues 199 to 218 traverse the membrane as a helical segment; the sequence is ALYIISFIVLSIPLSLISIS. Topologically, residues 219 to 238 are cytoplasmic; it reads YVFIVVAILRIRSAEGRQQA. Residues 239-259 form a helical membrane-spanning segment; it reads YSTCSSHILVVLLQYGCTSFI. The Extracellular portion of the chain corresponds to 260–272; the sequence is YLSPSSSYSPEMG. Residues 273-293 traverse the membrane as a helical segment; it reads RVVSVAYTFITPILNPLIYSL. Topologically, residues 294–309 are cytoplasmic; it reads RNKELKDALRKALRKF.

This sequence belongs to the G-protein coupled receptor 1 family.

Its subcellular location is the cell membrane. Odorant receptor. This chain is Olfactory receptor 10V1 (OR10V1), found in Homo sapiens (Human).